The chain runs to 211 residues: Pyridoxine/pyridoxamine 5'-phosphate oxidase (211 aa).

Substrate-binding positions include 7–10 (RREY) and K65. Residues 60–65 (RIVLLK), 75–76 (FT), K82, and Q104 contribute to the FMN site. 3 residues coordinate substrate: Y122, R126, and S130. Residues 139–140 (QS) and W184 each bind FMN. Position 190–192 (190–192 (RLH)) interacts with substrate. Residue R194 participates in FMN binding.

This sequence belongs to the pyridoxamine 5'-phosphate oxidase family. Homodimer. FMN serves as cofactor.

The catalysed reaction is pyridoxamine 5'-phosphate + O2 + H2O = pyridoxal 5'-phosphate + H2O2 + NH4(+). It catalyses the reaction pyridoxine 5'-phosphate + O2 = pyridoxal 5'-phosphate + H2O2. It participates in cofactor metabolism; pyridoxal 5'-phosphate salvage; pyridoxal 5'-phosphate from pyridoxamine 5'-phosphate: step 1/1. Its pathway is cofactor metabolism; pyridoxal 5'-phosphate salvage; pyridoxal 5'-phosphate from pyridoxine 5'-phosphate: step 1/1. In terms of biological role, catalyzes the oxidation of either pyridoxine 5'-phosphate (PNP) or pyridoxamine 5'-phosphate (PMP) into pyridoxal 5'-phosphate (PLP). This is Pyridoxine/pyridoxamine 5'-phosphate oxidase from Teredinibacter turnerae (strain ATCC 39867 / T7901).